Reading from the N-terminus, the 517-residue chain is Cytochrome P450 monooxygenase polD (517 aa).

Residues 5–27 traverse the membrane as a helical segment; sequence VVLVGIVVLVLAYLSSTGKVYPH. C435 is a heme binding site.

Belongs to the cytochrome P450 family. It depends on heme as a cofactor.

It localises to the membrane. Its function is as follows. Cytochrome P450 monooxygenase; part of the gene cluster that mediates the biosynthesis of antifungal fernane-type triterpenoid polytolypin. PolD doe not seem to be involved in the biosynthesis of polytolypin. Within the pathway, the triterpene cyclase polA first catalyzes the cyclization of 2,3-oxidosqualene to motiol, polc converts the 4-alpha-methyl group of motiol to a carboxyl group, polB is responsible for appending a hydroxyl group at the 2-alpha position and polE is a dual functional P450, which can catalyze the formation of both the 1-beta-hydroxyl group and 10-beta-carboxyl group. The sequence is that of Cytochrome P450 monooxygenase polD from Polytolypa hystricis (strain UAMH7299).